A 669-amino-acid chain; its full sequence is Dynamin-related protein 4C (669 aa).

Residues 1–21 (MVKKKVATKKNSPSLAIAKKK) form a disordered region. The Dynamin-type G domain maps to 62 to 323 (GIHLPTIVVV…QSSMIARCLP (262 aa)). A G1 motif region spans residues 72-79 (GDQSSGKS). A GTP-binding site is contributed by 72 to 79 (GDQSSGKS). The tract at residues 97–99 (CTR) is G2 motif. The segment at 171-174 (DLPG) is G3 motif. GTP contacts are provided by residues 171-175 (DLPGI) and 240-243 (TKAD). A G4 motif region spans residues 240-243 (TKAD). Glu-273 is a region of interest (G5 motif). The region spanning 575–669 (AFDMKMRITS…AVAAIVDQNC (95 aa)) is the GED domain.

The protein belongs to the TRAFAC class dynamin-like GTPase superfamily. Dynamin/Fzo/YdjA family.

The protein localises to the cytoplasm. It localises to the cytoskeleton. Functionally, putative microtubule-associated force-producing protein, able to bind and hydrolyze GTP. The protein is Dynamin-related protein 4C (DRP4C) of Arabidopsis thaliana (Mouse-ear cress).